We begin with the raw amino-acid sequence, 145 residues long: Transcriptional regulator MraZ (145 aa).

2 SpoVT-AbrB domains span residues 5–47 (EHQH…PLPE) and 76–119 (AVEC…AKDQ).

Belongs to the MraZ family. As to quaternary structure, forms oligomers.

The protein localises to the cytoplasm. Its subcellular location is the nucleoid. The protein is Transcriptional regulator MraZ of Pelotomaculum thermopropionicum (strain DSM 13744 / JCM 10971 / SI).